Consider the following 115-residue polypeptide: U3-lycotoxin-Ls1a (115 aa).

Residues 1–20 (MKFVLLFGVLLLTLFSYSSA) form the signal peptide. A propeptide spanning residues 21 to 44 (EMLDDFDQADEDELLSLIEKEEAR) is cleaved from the precursor. 4 disulfide bridges follow: Cys48/Cys63, Cys55/Cys72, Cys62/Cys87, and Cys74/Cys85.

This sequence belongs to the neurotoxin 19 (CSTX) family. 01 subfamily. As to expression, expressed by the venom gland.

It is found in the secreted. This Lycosa singoriensis (Wolf spider) protein is U3-lycotoxin-Ls1a.